The sequence spans 279 residues: Nitrogenase vanadium-iron protein alpha chain (279 aa).

C5, C31, and C94 together coordinate [8Fe-7S] cluster. [7Fe-V-9S-C-homocitryl] cluster is bound at residue C213.

It belongs to the NifD/NifK/NifE/NifN family. As to quaternary structure, hexamer of two alpha, two beta, and two delta chains. The cofactor is [8Fe-7S] cluster. [7Fe-V-9S-C-homocitryl] cluster serves as cofactor.

It carries out the reaction N2 + 8 reduced [2Fe-2S]-[ferredoxin] + 16 ATP + 16 H2O = H2 + 8 oxidized [2Fe-2S]-[ferredoxin] + 2 NH4(+) + 16 ADP + 16 phosphate + 6 H(+). In terms of biological role, this vanadium-iron protein is part of the nitrogenase complex that catalyzes the key enzymatic reactions in nitrogen fixation. This chain is Nitrogenase vanadium-iron protein alpha chain (vnfD), found in Azotobacter salinestris.